The primary structure comprises 695 residues: Elongation factor G (695 aa).

One can recognise a tr-type G domain in the interval 8-282 (EKTRNIGIMA…AVLDYLPAPT (275 aa)). Residues 17–24 (AHIDAGKT), 81–85 (DTPGH), and 135–138 (NKMD) each bind GTP.

This sequence belongs to the TRAFAC class translation factor GTPase superfamily. Classic translation factor GTPase family. EF-G/EF-2 subfamily.

It is found in the cytoplasm. In terms of biological role, catalyzes the GTP-dependent ribosomal translocation step during translation elongation. During this step, the ribosome changes from the pre-translocational (PRE) to the post-translocational (POST) state as the newly formed A-site-bound peptidyl-tRNA and P-site-bound deacylated tRNA move to the P and E sites, respectively. Catalyzes the coordinated movement of the two tRNA molecules, the mRNA and conformational changes in the ribosome. The polypeptide is Elongation factor G (Listeria welshimeri serovar 6b (strain ATCC 35897 / DSM 20650 / CCUG 15529 / CIP 8149 / NCTC 11857 / SLCC 5334 / V8)).